A 552-amino-acid polypeptide reads, in one-letter code: MNRPCNIAARLPELARERPDQIAIRCPGRRGAGNGMAAYDVTLDYRQLDARSDAMAAGLAGYGIGRGVRTVVMVRPSPEFFLLMFALFKLGAVPVLVDPGIDRRALKQCLDEAQPEAFIGIPLAHVARLVLRWAPSAARLVTVGRRLGWGGTTLAALERAGAKGGPMLAATDGEDMAAILFTSGSTGVPKGVVYRHRHFVGQIQLLGSAFGMEAGGVDLPTFPPFALFDPALGLTSVIPDMDPTRPAQADPVRLHDAIQRFGVTQLFGSPALMRVLAKHGRPLPTVTRVTSAGAPVPPDVVATIRSLLPADAQFWTPYGATECLPVAVVEGRELERTRAATEAGAGTCVGSVVAPNEVRIIAIDDAPLADWSQARVLAVGEVGEITVAGPTATDSYFNRPQATAAAKIRETLADGSTRVVHRMGDVGYFDAQGRLWFCGRKTQRVETARGPLYTEQVEPVFNTVAGVARTALVGVGAAGAQVPVLCVELLRGQSDSPALQEALRAHAAARTPEAGLQHFLVHPAFPVDIRHNAKIGREKLAVWASAELEKRA.

ATP contacts are provided by residues 182–190, 316–321, Asp425, and Arg440; these read TSGSTGVPK and TPYGAT.

This sequence belongs to the ATP-dependent AMP-binding enzyme family. As to quaternary structure, monomer.

The enzyme catalyses a (2R,3S)-2-alkyl-3-hydroxyalkanoate + ATP = a cis-3-alkyl-4-alkyloxetan-2-one + AMP + diphosphate. Its function is as follows. Involved in olefin biosynthesis. Catalyzes the conversion of beta-hydroxy acid substrates to beta-lactones in the presence of ATP. Can use all four stereoisomers of 2-hexyl-3-hydroxydecanoic acid. The chain is Olefin beta-lactone synthetase from Stenotrophomonas maltophilia (strain K279a).